The sequence spans 640 residues: Protein SPT10 (640 aa).

The tract at residues 1 to 30 (MLNQHTSSVPDDEHLQMAHQNSSSEVRNEA) is disordered. The N-acetyltransferase domain occupies 121-259 (LDYSMDTEAD…AGILKGFDVP (139 aa)). The segment at 534 to 565 (PHLTNNESQDHANPVNRDERDMNHSVPDLDRN) is disordered. Over residues 549–565 (NRDERDMNHSVPDLDRN) the composition is skewed to basic and acidic residues.

Its function is as follows. Required for normal transcription at a number of loci in yeast. Affects transcription at Ty1 elements, at PHO5, STE6 and ADH2. The polypeptide is Protein SPT10 (SPT10) (Saccharomyces cerevisiae (strain ATCC 204508 / S288c) (Baker's yeast)).